Here is a 73-residue protein sequence, read N- to C-terminus: Translation initiation factor IF-1 (73 aa).

Residues 1-73 enclose the S1-like domain; that stretch reads MAKKDGVIEI…TRGRIVYRYK (73 aa).

It belongs to the IF-1 family. Component of the 30S ribosomal translation pre-initiation complex which assembles on the 30S ribosome in the order IF-2 and IF-3, IF-1 and N-formylmethionyl-tRNA(fMet); mRNA recruitment can occur at any time during PIC assembly.

The protein resides in the cytoplasm. Functionally, one of the essential components for the initiation of protein synthesis. Stabilizes the binding of IF-2 and IF-3 on the 30S subunit to which N-formylmethionyl-tRNA(fMet) subsequently binds. Helps modulate mRNA selection, yielding the 30S pre-initiation complex (PIC). Upon addition of the 50S ribosomal subunit IF-1, IF-2 and IF-3 are released leaving the mature 70S translation initiation complex. The polypeptide is Translation initiation factor IF-1 (Leifsonia xyli subsp. xyli (strain CTCB07)).